A 196-amino-acid chain; its full sequence is Large ribosomal subunit protein mL66 (196 aa).

Residues 1-34 (MAALNVLVSGCGRFLRGLLTGPTVTSWARPPARG) constitute a mitochondrion transit peptide.

This sequence belongs to the bacterial ribosomal protein bS18 family. Mitochondrion-specific ribosomal protein mL66 subfamily. As to quaternary structure, component of the mitochondrial ribosome small subunit (28S) which comprises a 12S rRNA and about 30 distinct proteins.

Its subcellular location is the mitochondrion. The sequence is that of Large ribosomal subunit protein mL66 (MRPS18A) from Bos taurus (Bovine).